Reading from the N-terminus, the 24-residue chain is Pyruvate kinase (24 aa).

Belongs to the pyruvate kinase family. Homotetramer. Mg(2+) is required as a cofactor. It depends on K(+) as a cofactor.

It catalyses the reaction pyruvate + ATP = phosphoenolpyruvate + ADP + H(+). The protein operates within carbohydrate degradation; glycolysis; pyruvate from D-glyceraldehyde 3-phosphate: step 5/5. This Clostridium pasteurianum protein is Pyruvate kinase (pyk).